The following is a 112-amino-acid chain: Putative pterin-4-alpha-carbinolamine dehydratase (112 aa).

It belongs to the pterin-4-alpha-carbinolamine dehydratase family.

It carries out the reaction (4aS,6R)-4a-hydroxy-L-erythro-5,6,7,8-tetrahydrobiopterin = (6R)-L-erythro-6,7-dihydrobiopterin + H2O. The chain is Putative pterin-4-alpha-carbinolamine dehydratase from Shewanella sp. (strain MR-7).